The chain runs to 151 residues: MIKIKKHRRNPYTTSDEVYALGQHICMSAHKARRIIDQIRGRSYEETLMILELMPYRACYPILKLVYSAAANARHNRGFNEASLIISQVAVNEGTTLKRLNPRARGRSYLIKRPTCHITIALKDLEFEPLDRYMLRPKPKNTGWLGWLKKG.

The protein belongs to the universal ribosomal protein uL22 family. In terms of assembly, part of the 50S ribosomal subunit.

It localises to the plastid. It is found in the chloroplast. In terms of biological role, this protein binds specifically to 23S rRNA. The globular domain of the protein is located near the polypeptide exit tunnel on the outside of the subunit, while an extended beta-hairpin is found that lines the wall of the exit tunnel in the center of the 70S ribosome. In Gossypium barbadense (Sea Island cotton), this protein is Large ribosomal subunit protein uL22c (rpl22).